Reading from the N-terminus, the 161-residue chain is Pleiotrophin-A (161 aa).

The first 23 residues, 1-23 (MRHQHGLFMLALLAFLFVITVLG), serve as a signal peptide directing secretion. Cystine bridges form between Cys41-Cys70, Cys49-Cys79, Cys56-Cys83, Cys93-Cys125, and Cys103-Cys135. Chondroitin sulfate binding stretches follow at residues 86-93 (KKQFGAEC) and 117-125 (KRALHNAEC). The interval 136–161 (GKVTKPKLQESKKKKKEGKNKEKLLD) is disordered. The segment at 141–161 (PKLQESKKKKKEGKNKEKLLD) is chondroitin sulfate A binding.

The protein belongs to the pleiotrophin family. Expressed in high levels in brain and eye. Lower levels in bone. In the tailbud embryo stage, it is expressed exclusively in the central nervous system, especially in the hind region of the brain.

It localises to the secreted. Secreted growth factor that mediates its signal through cell-surface proteoglycan and non-proteoglycan receptors. Binds cell-surface proteoglycan receptor via their chondroitin sulfate (CS) groups. Thereby regulates many processes like cell proliferation, cell survival, cell growth, cell differentiation and cell migration. Has antibacterial activity against both Gram-positive and Gram-negative bacteria. In Xenopus laevis (African clawed frog), this protein is Pleiotrophin-A (ptn-a).